Here is a 348-residue protein sequence, read N- to C-terminus: Dihydroorotase (348 aa).

2 residues coordinate Zn(2+): His17 and His19. Substrate is bound by residues 19–21 (HLR) and Asn45. Lys103, His140, and His178 together coordinate Zn(2+). An N6-carboxylysine modification is found at Lys103. His140 contributes to the substrate binding site. Substrate is bound at residue Leu223. A Zn(2+)-binding site is contributed by Asp251. The active site involves Asp251. His255 and Ala267 together coordinate substrate.

It belongs to the metallo-dependent hydrolases superfamily. DHOase family. Class II DHOase subfamily. As to quaternary structure, homodimer. Zn(2+) is required as a cofactor.

It catalyses the reaction (S)-dihydroorotate + H2O = N-carbamoyl-L-aspartate + H(+). It functions in the pathway pyrimidine metabolism; UMP biosynthesis via de novo pathway; (S)-dihydroorotate from bicarbonate: step 3/3. Functionally, catalyzes the reversible cyclization of carbamoyl aspartate to dihydroorotate. In Salmonella dublin (strain CT_02021853), this protein is Dihydroorotase.